A 300-amino-acid chain; its full sequence is MLDLYPVQNLTVDQLEYEKNTRFLQPAWDWIKNGNEHILSSPLFPPFYALSIDYTWVAVFTFIDVFLCNVPFFKDAKIQKDRKVTWDLIKKSLKLQGWNQLLWIYPMALVQLIWVPDTELPILAPTVFEMLSQLAIFFLAFDFTYFWFHYINHKVKWLYRWCHSVHHMYSSPFAASAQHLHPFELFFVGTFITTIPWIFPTHCLTYWIWFFIAQSVSYEVHIGYDFPFALHRIFWFYSGAPAHDMHHLRPLTCFQPWFNYLDRLMGYHITYADLKKMTEAKFKKFGLYSAEDEKGLIKIN.

N-linked (GlcNAc...) asparagine glycosylation is present at Asn-9. 3 helical membrane-spanning segments follow: residues 54-73 (YTWVAVFTFIDVFLCNVPFF), 95-115 (LQGWNQLLWIYPMALVQLIWV), and 130-152 (MLSQLAIFFLAFDFTYFWFHYIN). Residues 135 to 266 (AIFFLAFDFT…WFNYLDRLMG (132 aa)) form the Fatty acid hydroxylase domain. Positions 148–152 (FHYIN) match the Histidine box-1 motif. The Histidine box-2 motif lies at 163-167 (HSVHH). A helical membrane pass occupies residues 192–212 (ITTIPWIFPTHCLTYWIWFFI). Positions 242–248 (AHDMHHL) match the Histidine box-3 motif.

Belongs to the sterol desaturase family. Requires Fe cation as cofactor.

The protein localises to the membrane. Its function is as follows. Probable sterol desaturase. The chain is Cholesterol 25-hydroxylase-like protein from Caenorhabditis elegans.